A 166-amino-acid chain; its full sequence is Phospholipase A2 inhibitor clone 02/03/06/07 (166 aa).

An N-terminal signal peptide occupies residues 1-19; the sequence is MRLILLSGLLLLGTFLANG. The region spanning 46 to 161 is the C-type lectin domain; it reads LKHAFLTVHK…CDDNLLVVCE (116 aa). 2 disulfides stabilise this stretch: cysteine 83-cysteine 160 and cysteine 138-cysteine 152. Asparagine 122 carries an N-linked (GlcNAc...) asparagine glycan.

This sequence belongs to the alpha-type phospholipase A2 inhibitor family. Homotrimer; non-covalently linked. As to expression, expressed by the liver.

The protein resides in the secreted. Functionally, this phospholipase A2 inhibitor binds directly phospholipase A2 in the presence or absence of calcium. The sequence is that of Phospholipase A2 inhibitor clone 02/03/06/07 from Lachesis muta muta (Bushmaster).